A 24-amino-acid chain; its full sequence is Defensin D6 (24 aa).

It belongs to the DEFL family. Group IV subfamily. Distributed in the epidermal cell layer of leaves and in the subepidermal layer region of stems. Not in roots.

It is found in the secreted. The protein localises to the cell wall. In terms of biological role, antimicrobial peptide. Active against Fusarium spp., Gram-positive and Gram-negative bacterial pathogens. The chain is Defensin D6 from Spinacia oleracea (Spinach).